The primary structure comprises 173 residues: NADH-ubiquinone oxidoreductase chain 6 (173 aa).

Helical transmembrane passes span 1 to 21, 27 to 47, 48 to 68, 87 to 107, and 139 to 159; these read MTYF…AVAS, YGVV…LSLG, VSFV…VVFV, VVGY…VGGF, and CGVG…FVVL.

The protein belongs to the complex I subunit 6 family.

It localises to the mitochondrion membrane. The enzyme catalyses a ubiquinone + NADH + 5 H(+)(in) = a ubiquinol + NAD(+) + 4 H(+)(out). Core subunit of the mitochondrial membrane respiratory chain NADH dehydrogenase (Complex I) that is believed to belong to the minimal assembly required for catalysis. Complex I functions in the transfer of electrons from NADH to the respiratory chain. The immediate electron acceptor for the enzyme is believed to be ubiquinone. This chain is NADH-ubiquinone oxidoreductase chain 6 (MT-ND6), found in Aethia pygmaea (Whiskered auklet).